Here is a 180-residue protein sequence, read N- to C-terminus: Large ribosomal subunit protein uL5 (180 aa).

Belongs to the universal ribosomal protein uL5 family. In terms of assembly, part of the 50S ribosomal subunit; part of the 5S rRNA/L5/L18/L25 subcomplex. Contacts the 5S rRNA and the P site tRNA. Forms a bridge to the 30S subunit in the 70S ribosome.

Its function is as follows. This is one of the proteins that bind and probably mediate the attachment of the 5S RNA into the large ribosomal subunit, where it forms part of the central protuberance. In the 70S ribosome it contacts protein S13 of the 30S subunit (bridge B1b), connecting the 2 subunits; this bridge is implicated in subunit movement. Contacts the P site tRNA; the 5S rRNA and some of its associated proteins might help stabilize positioning of ribosome-bound tRNAs. In Leuconostoc citreum (strain KM20), this protein is Large ribosomal subunit protein uL5.